A 517-amino-acid chain; its full sequence is Glucose-6-phosphate isomerase (517 aa).

Glu345 acts as the Proton donor in catalysis. Residues His376 and Lys490 contribute to the active site.

It belongs to the GPI family.

It is found in the cytoplasm. It catalyses the reaction alpha-D-glucose 6-phosphate = beta-D-fructose 6-phosphate. Its pathway is carbohydrate biosynthesis; gluconeogenesis. It functions in the pathway carbohydrate degradation; glycolysis; D-glyceraldehyde 3-phosphate and glycerone phosphate from D-glucose: step 2/4. Catalyzes the reversible isomerization of glucose-6-phosphate to fructose-6-phosphate. The polypeptide is Glucose-6-phosphate isomerase (Erythrobacter litoralis (strain HTCC2594)).